A 196-amino-acid polypeptide reads, in one-letter code: MNVVIVDTECANLTSVRFAVERLGYSVLITDDAEQIRAADRVILPGVGTAAAAMRNLQRKQLVEPLRELTQPVLGICLGMQLLTSHSEEGDVDCLNLIPAKTKRLRDSGLPLPHMGWNTLQPTADNPLVDTSDSYCYFVHSFAVAVDEYTIASSEYGERFASMIRHNNYFGAQFHPERSGKTGEALLKRFLELTLC.

Positions 2-196 (NVVIVDTECA…LKRFLELTLC (195 aa)) constitute a Glutamine amidotransferase type-1 domain. Cysteine 77 acts as the Nucleophile in catalysis. Active-site residues include histidine 175 and glutamate 177.

In terms of assembly, heterodimer of HisH and HisF.

It is found in the cytoplasm. It carries out the reaction 5-[(5-phospho-1-deoxy-D-ribulos-1-ylimino)methylamino]-1-(5-phospho-beta-D-ribosyl)imidazole-4-carboxamide + L-glutamine = D-erythro-1-(imidazol-4-yl)glycerol 3-phosphate + 5-amino-1-(5-phospho-beta-D-ribosyl)imidazole-4-carboxamide + L-glutamate + H(+). The enzyme catalyses L-glutamine + H2O = L-glutamate + NH4(+). Its pathway is amino-acid biosynthesis; L-histidine biosynthesis; L-histidine from 5-phospho-alpha-D-ribose 1-diphosphate: step 5/9. Functionally, IGPS catalyzes the conversion of PRFAR and glutamine to IGP, AICAR and glutamate. The HisH subunit catalyzes the hydrolysis of glutamine to glutamate and ammonia as part of the synthesis of IGP and AICAR. The resulting ammonia molecule is channeled to the active site of HisF. The protein is Imidazole glycerol phosphate synthase subunit HisH of Idiomarina loihiensis (strain ATCC BAA-735 / DSM 15497 / L2-TR).